Consider the following 342-residue polypeptide: MNIFAIETSCDETSASVVLNGLKVKSVVIYSQIKIHAGFFGVVPELASRSHIENINLVIWRALSDAGINFTDFSQKIDALAFTSGPGLAGALLVGAIAAKSLACVYKKPLIPVNHLDGHLYSSLIENRSVKLPFLSLIISGGHTELVVVEDFGKYKVLGSTRDDAAGEAFDKAAKMLGLSYPGGPIIDKIAESGNPEAVRFTRPYLKGSWDFSFSGIKTALLNYLKTNPVRNEKQLNDICASFRQAVAETLCFKSFEAAKKFNLKRIVLGGGVSANSLIRKIFLETGQKNNTKVFIPSLIYSTDNAAMIGCAAYFKQKKCGLKYDNIQLKPNPSLPLENWRL.

Positions 115 and 119 each coordinate Fe cation. Residues 138–142, Asp171, Gly184, Asp188, and Asn276 each bind substrate; that span reads IISGG. Asp304 lines the Fe cation pocket.

This sequence belongs to the KAE1 / TsaD family. Requires Fe(2+) as cofactor.

It is found in the cytoplasm. The enzyme catalyses L-threonylcarbamoyladenylate + adenosine(37) in tRNA = N(6)-L-threonylcarbamoyladenosine(37) in tRNA + AMP + H(+). In terms of biological role, required for the formation of a threonylcarbamoyl group on adenosine at position 37 (t(6)A37) in tRNAs that read codons beginning with adenine. Is involved in the transfer of the threonylcarbamoyl moiety of threonylcarbamoyl-AMP (TC-AMP) to the N6 group of A37, together with TsaE and TsaB. TsaD likely plays a direct catalytic role in this reaction. This Endomicrobium trichonymphae protein is tRNA N6-adenosine threonylcarbamoyltransferase.